The primary structure comprises 244 residues: tRNA (guanine-N(1)-)-methyltransferase (244 aa).

Residues G120 and 140–145 (IGDYIL) contribute to the S-adenosyl-L-methionine site.

This sequence belongs to the RNA methyltransferase TrmD family. Homodimer.

It is found in the cytoplasm. It carries out the reaction guanosine(37) in tRNA + S-adenosyl-L-methionine = N(1)-methylguanosine(37) in tRNA + S-adenosyl-L-homocysteine + H(+). In terms of biological role, specifically methylates guanosine-37 in various tRNAs. This chain is tRNA (guanine-N(1)-)-methyltransferase, found in Brucella canis (strain ATCC 23365 / NCTC 10854 / RM-666).